The chain runs to 278 residues: Undecaprenyl-diphosphatase (278 aa).

Transmembrane regions (helical) follow at residues 3–23, 42–62, 88–108, 112–132, 152–172, 190–210, 225–245, and 253–273; these read YILI…IPIS, VAYS…IIYF, FLVI…LFVI, ILGL…IIIY, IIIV…RSGI, LSFI…VLFS, GLLI…NALL, and VVVL…LSGI.

Belongs to the UppP family.

Its subcellular location is the cell membrane. The catalysed reaction is di-trans,octa-cis-undecaprenyl diphosphate + H2O = di-trans,octa-cis-undecaprenyl phosphate + phosphate + H(+). Its function is as follows. Catalyzes the dephosphorylation of undecaprenyl diphosphate (UPP). The protein is Undecaprenyl-diphosphatase of Saccharolobus islandicus (strain M.16.4 / Kamchatka #3) (Sulfolobus islandicus).